The primary structure comprises 281 residues: Probable superoxide dismutase [Fe] (281 aa).

Fe cation is bound by residues histidine 104, histidine 152, aspartate 236, and histidine 240.

This sequence belongs to the iron/manganese superoxide dismutase family. Requires Fe cation as cofactor.

It carries out the reaction 2 superoxide + 2 H(+) = H2O2 + O2. Functionally, destroys superoxide anion radicals which are normally produced within the cells and which are toxic to biological systems. The polypeptide is Probable superoxide dismutase [Fe] (sodF) (Bacillus subtilis (strain 168)).